We begin with the raw amino-acid sequence, 281 residues long: Fibrinogen-like protein 1-like protein (281 aa).

The N-terminal stretch at 1–33 (MGLQAGTRQLHGNLILLPVAVVMLLLCTSPVCA) is a signal peptide. A Fibrinogen C-terminal domain is found at 34 to 246 (TASVGLPADC…RPSSWSNPPM (213 aa)). Intrachain disulfides connect Cys43-Cys69 and Cys201-Cys213. A compositionally biased stretch (low complexity) spans 260–269 (PSRSPSLPSP). Positions 260–281 (PSRSPSLPSPITATHTVRNQLQ) are disordered. Polar residues predominate over residues 270 to 281 (ITATHTVRNQLQ).

As to expression, expressed in smal intestine, colon and lung.

Functionally, shows a cytidine deaminase activity on 2'-deoxycytidine (in vitro), however shows no RNA editing activity (in vitro). The sequence is that of Fibrinogen-like protein 1-like protein from Gallus gallus (Chicken).